The primary structure comprises 213 residues: Kynurenine formamidase (213 aa).

Tryptophan 20 is a binding site for substrate. Residues histidine 50, histidine 54, and aspartate 56 each contribute to the Zn(2+) site. Histidine 60 (proton donor/acceptor) is an active-site residue. Zn(2+) contacts are provided by histidine 161 and glutamate 173.

Belongs to the Cyclase 1 superfamily. KynB family. In terms of assembly, homodimer. It depends on Zn(2+) as a cofactor.

It catalyses the reaction N-formyl-L-kynurenine + H2O = L-kynurenine + formate + H(+). It participates in amino-acid degradation; L-tryptophan degradation via kynurenine pathway; L-kynurenine from L-tryptophan: step 2/2. Functionally, catalyzes the hydrolysis of N-formyl-L-kynurenine to L-kynurenine, the second step in the kynurenine pathway of tryptophan degradation. In Pseudomonas aeruginosa (strain UCBPP-PA14), this protein is Kynurenine formamidase.